Here is a 93-residue protein sequence, read N- to C-terminus: MSGRRVYSTSVTGSREIKSQQSEVTRILDGKRIQYQLVDISQDNALRDEMRALAGNPKATPPQIVNGDQYCGDYELFVEAVEQNTLQEFLKLA.

S2 carries the post-translational modification N-acetylserine. S2 carries an O-linked (GalNAc...) serine glycan. In terms of domain architecture, Glutaredoxin spans 2-93 (SGRRVYSTSV…NTLQEFLKLA (92 aa)). O-linked (GalNAc...) threonine glycans are attached at residues T9 and T12.

Belongs to the SH3BGR family. In terms of assembly, homodimer. Interacts with MYO1C (via its IQ motifs); the interaction is dependent on calcium and takes place at membrane ruffles. Post-translationally, may be glycosylated.

It is found in the cytoplasm. It localises to the cytosol. The protein localises to the cell projection. The protein resides in the ruffle membrane. Its subcellular location is the nucleus. Could act as a modulator of glutaredoxin biological activity. May play a role in cytoskeleton organization. The protein is SH3 domain-binding glutamic acid-rich-like protein 3 (SH3BGRL3) of Pongo abelii (Sumatran orangutan).